We begin with the raw amino-acid sequence, 60 residues long: Cytotoxin 3 (60 aa).

Cystine bridges form between C3–C21, C14–C38, C42–C53, and C54–C59.

It belongs to the three-finger toxin family. Short-chain subfamily. Type IA cytotoxin sub-subfamily. As to quaternary structure, monomer in solution; Homodimer and oligomer in the presence of negatively charged lipids forming a pore with a size ranging between 20 and 30 Angstroms. Expressed by the venom gland.

The protein localises to the secreted. It is found in the target cell membrane. Its function is as follows. Shows cytolytic activity on many different cells by forming pore in lipid membranes. In vivo, increases heart rate or kills the animal by cardiac arrest. In addition, it binds to heparin with high affinity, interacts with Kv channel-interacting protein 1 (KCNIP1) in a calcium-independent manner, and binds to integrin alpha-V/beta-3 (ITGAV/ITGB3) with moderate affinity. This Naja annulifera (Banded Egyptian cobra) protein is Cytotoxin 3.